The following is a 197-amino-acid chain: uncharacterized protein (197 aa).

Positions 1–23 (MSARAPKELRLALPPCLLNRTFA) are cleaved as a signal peptide. The Extracellular portion of the chain corresponds to 24–61 (SPNASGSGNTGARGPGAVGSGTCITQVGQQLFQSFSST). Asn-26 carries N-linked (GlcNAc...) asparagine glycosylation. Residues 62–82 (LVLIVLVTLIFCLIVLSLSTF) traverse the membrane as a helical segment. The Cytoplasmic segment spans residues 83–197 (HIHKRRMKKR…EGLLQTVVLS (115 aa)). The disordered stretch occupies residues 94-180 (MQRAQEEYER…SSPQGAHAAS (87 aa)). Basic and acidic residues-rich tracts occupy residues 96-107 (RAQEEYERDHCS) and 125-136 (HAKETRLERQPR). The segment covering 141–161 (CAPSNASSLSSSSPGLPCQGP) has biased composition (low complexity). Pro residues predominate over residues 162 to 171 (CAPPPPPPAS).

Its subcellular location is the membrane. This is an uncharacterized protein from Homo sapiens (Human).